Consider the following 127-residue polypeptide: Major sperm protein 2 (127 aa).

Ala2 is modified (N-acetylalanine). The MSP domain occupies 9–126 (DIHTQPGSKI…RRKNLPIEYN (118 aa)).

As to expression, sperm.

The protein resides in the cell projection. Its subcellular location is the pseudopodium. It is found in the cytoplasm. It localises to the cytoskeleton. In terms of biological role, central component in molecular interactions underlying sperm crawling. Forms an extensive filament system that extends from sperm villipoda, along the leading edge of the pseudopod. In Onchocerca volvulus, this protein is Major sperm protein 2.